The chain runs to 324 residues: G patch domain-containing protein 4 (324 aa).

Disordered stretches follow at residues 1 to 30 (MSASSVKKSQGMKFAEEQMHKHGWKEGKGL) and 123 to 324 (LSGG…NKSE). A G-patch domain is found at 11–57 (GMKFAEEQMHKHGWKEGKGLGRRENGICEAIKVKVKCDHAGVGHNSA). Residues 14–30 (FAEEQMHKHGWKEGKGL) show a composition bias toward basic and acidic residues. Residues 131–141 (KEPSSSESSDS) show a composition bias toward low complexity. Positions 186–215 (SRLEEQEREFLAKYGKKEQKNKERDEKLER) are enriched in basic and acidic residues. Residues 244–253 (HKKKKKKRKR) show a composition bias toward basic residues. Basic and acidic residues predominate over residues 254 to 270 (ADSERKEESQENGHEEE). The span at 296 to 309 (PSTQEEQPTESSDF) shows a compositional bias: polar residues. Residues 312-324 (KPKKKKKKKNKSE) show a composition bias toward basic residues.

The chain is G patch domain-containing protein 4 (gpatch4) from Xenopus laevis (African clawed frog).